A 464-amino-acid polypeptide reads, in one-letter code: NADH dehydrogenase [ubiquinone] flavoprotein 1, mitochondrial (464 aa).

A mitochondrion-targeting transit peptide spans 1–20; that stretch reads MLAARRLLGGSLPSRVSVRF. K81 carries the post-translational modification N6-acetyllysine; alternate. N6-succinyllysine; alternate is present on K81. 87–96 is an NADH binding site; sequence GRGGAGFPTG. K104 carries the post-translational modification N6-acetyllysine. Residue 199-247 coordinates FMN; the sequence is RGAGAYICGEETALIESIEGKQGKPRLKPPFPADVGVFGCPTTVANVET. Omega-N-methylarginine is present on R257. K375 is modified (N6-acetyllysine). Residues C379, C382, C385, and C425 each coordinate [4Fe-4S] cluster.

This sequence belongs to the complex I 51 kDa subunit family. As to quaternary structure, core subunit of respiratory chain NADH dehydrogenase (Complex I) which is composed of 45 different subunits. This is a component of the flavoprotein-sulfur (FP) fragment of the enzyme. Interacts with RAB5IF. It depends on FMN as a cofactor. [4Fe-4S] cluster is required as a cofactor.

The protein localises to the mitochondrion inner membrane. The catalysed reaction is a ubiquinone + NADH + 5 H(+)(in) = a ubiquinol + NAD(+) + 4 H(+)(out). Core subunit of the mitochondrial membrane respiratory chain NADH dehydrogenase (Complex I) which catalyzes electron transfer from NADH through the respiratory chain, using ubiquinone as an electron acceptor. Part of the peripheral arm of the enzyme, where the electrons from NADH are accepted by flavin mononucleotide (FMN) and then passed along a chain of iron-sulfur clusters by electron tunnelling to the final acceptor ubiquinone. Contains FMN, which is the initial electron acceptor as well as one iron-sulfur cluster. This chain is NADH dehydrogenase [ubiquinone] flavoprotein 1, mitochondrial, found in Macaca fascicularis (Crab-eating macaque).